The following is a 180-amino-acid chain: uncharacterized protein (180 aa).

Positions 1–30 (MRHKIITFILAVVVIIIIGNMIGGGGGSEA) are cleaved as a signal peptide. Positions 25-46 (GGGSEATSKTSSSSKAETEKTY) are disordered. A compositionally biased stretch (low complexity) spans 29 to 39 (EATSKTSSSSK).

The protein resides in the secreted. This is an uncharacterized protein from Bacillus subtilis (strain 168).